A 314-amino-acid chain; its full sequence is N-myc-interactor (314 aa).

A disordered region spans residues 1-24; sequence MDADKDNIKQACDERSAEMDDMRG. Position 16 is a phosphoserine (S16). A coiled-coil region spans residues 31–65; the sequence is VHEIMSENKELDEEIKKLEAELQSDAREFQIKENV. NID domains follow at residues 104–193 and 202–293; these read GQAL…GEVE and RSAV…EVEV.

Belongs to the NMI family. Interacts with MYCN and MYC, as well as with other transcription factors with a Zip, HLH or a HLH-Zip motif. Interacts with all STAT proteins except STAT2. Interacts with IRF7, the interaction is direct and leads to the inhibition of IRF7-mediated type I IFN production. Interacts (via coiled-coil domain) with TRIM21 (via the SPRY domain); the interaction leads to 'Lys-63'-linked ubiquitination of NMI. Interacts with IFI35; the interaction is direct and is facilitated by TRIM21. Interacts with TLR4; the interaction is direct and leads to NF-kappa-B activation. May be ubiquitinated. Expressed in macrophages.

Its subcellular location is the cytoplasm. It is found in the nucleus. The protein localises to the secreted. Acts as a signaling pathway regulator involved in innate immune system response. In response to interleukin 2/IL2 and interferon IFN-gamma/IFNG, interacts with signal transducer and activator of transcription/STAT which activate the transcription of downstream genes involved in a multitude of signals for development and homeostasis. Enhances the recruitment of CBP/p300 coactivators to STAT1 and STAT5, resulting in increased STAT1- and STAT5-dependent transcription. In response to interferon IFN-alpha, associates in a complex with transcriptional regulator IFI35 to regulate immune response; the complex formation prevents proteasome-mediated degradation of IFI35. In complex with IFI35, negatively regulates nuclear factor NF-kappa-B signaling by inhibiting the nuclear translocation, activation and transcription of NF-kappa-B subunit p65/RELA, resulting in the inhibition of endothelial cell proliferation, migration and re-endothelialization of injured arteries. Negatively regulates virus-triggered type I interferon/IFN production by inducing proteosome-dependent degradation of IRF7, a transcriptional regulator of type I IFN, thereby interfering with cellular antiviral responses. Beside its role as an intracellular signaling pathway regulator, also functions extracellularly as damage-associated molecular patterns (DAMPs) to promote inflammation, when actively released by macrophage to the extracellular space during cell injury or pathogen invasion. Macrophage-secreted NMI activates NF-kappa-B signaling in adjacent macrophages through Toll-like receptor 4/TLR4 binding and activation, thereby inducing NF-kappa-B translocation from the cytoplasm into the nucleus which promotes the release of pro-inflammatory cytokines. The polypeptide is N-myc-interactor (Mus musculus (Mouse)).